The sequence spans 254 residues: MAIANKNIIFVAGLGGIGLDTSKGIVKAGPKNLVILDRIENPAAIAELKAINPKVTVTFYPYDVTVPLAETKKLLTTIFAKLKTVDLLINGAGILNDHQIELTIAINFTGLVNTTTAIMDFWDKRKGGPGGAIANICSVTGFNAIYQVPVYSASKAAVVSFTSSLAKLAPITGVIAYSINPGITKTTLVHKFNSWLDVEPRVAELLDEHPTQTTTQCSQNFVKAIEANQNGAIWKLDLGRLDAVNWTKHWDSGI.

10–33 is a binding site for NAD(+); the sequence is FVAGLGGIGLDTSKGIVKAGPKNL. Ser138 serves as a coordination point for substrate. The Proton acceptor role is filled by Tyr151.

It belongs to the short-chain dehydrogenases/reductases (SDR) family. In terms of assembly, homodimer.

It carries out the reaction a primary alcohol + NAD(+) = an aldehyde + NADH + H(+). The catalysed reaction is a secondary alcohol + NAD(+) = a ketone + NADH + H(+). This is Alcohol dehydrogenase (Adh) from Drosophila immigrans (Fruit fly).